The following is a 170-amino-acid chain: Large ribosomal subunit protein uL22z (170 aa).

It belongs to the universal ribosomal protein uL22 family.

The sequence is that of Large ribosomal subunit protein uL22z from Hordeum vulgare (Barley).